The chain runs to 723 residues: Aminodeoxychorismate synthase (723 aa).

The 194-residue stretch at 2–195 (RTLLVDNYDS…RDLTERHGRT (194 aa)) folds into the Glutamine amidotransferase type-1 domain. C82 functions as the Nucleophile in the catalytic mechanism. Positions 96 to 117 (VGRAPEPRHGRTSAVRHDGTGL) are disordered. Over residues 98-114 (RAPEPRHGRTSAVRHDG) the composition is skewed to basic and acidic residues. Active-site residues include H169 and E171. Disordered regions lie at residues 192-219 (HGRTRHGGRAGHGTLPPPAPARETKATT) and 693-723 (FPGRERPGKDLDGEPDDGTDAGAPKDLVLPG). Residues 255-723 (LDSSRPGGEL…GAPKDLVLPG (469 aa)) form a PABB component region. Residues 695 to 704 (GRERPGKDLD) show a composition bias toward basic and acidic residues.

This sequence in the C-terminal section; belongs to the anthranilate synthase component I family.

The catalysed reaction is chorismate + L-glutamine = 4-amino-4-deoxychorismate + L-glutamate. The protein operates within antibiotic biosynthesis; candicidin biosynthesis. Its function is as follows. Involved in candicidin biosynthesis. Catalyzes the biosynthesis of 4-amino-4-deoxychorismate (ADC) from chorismate and glutamine. This chain is Aminodeoxychorismate synthase, found in Streptomyces griseus.